Here is a 98-residue protein sequence, read N- to C-terminus: Large ribosomal subunit protein bL27 (98 aa).

Residues 1–10 constitute a propeptide that is removed on maturation; the sequence is MELKMNLQLF. Residues 11–30 are disordered; the sequence is AQKKGTGSSKNGRDSISKRL.

The protein belongs to the bacterial ribosomal protein bL27 family. Post-translationally, the N-terminus is cleaved by ribosomal processing cysteine protease Prp.

The chain is Large ribosomal subunit protein bL27 from Natranaerobius thermophilus (strain ATCC BAA-1301 / DSM 18059 / JW/NM-WN-LF).